A 121-amino-acid chain; its full sequence is Large ribosomal subunit protein uL22c (121 aa).

It belongs to the universal ribosomal protein uL22 family. As to quaternary structure, part of the 50S ribosomal subunit.

The protein resides in the plastid. Its subcellular location is the chloroplast. Functionally, this protein binds specifically to 23S rRNA. Its function is as follows. The globular domain of the protein is located near the polypeptide exit tunnel on the outside of the subunit, while an extended beta-hairpin is found that lines the wall of the exit tunnel in the center of the 70S ribosome. The protein is Large ribosomal subunit protein uL22c (rpl22) of Welwitschia mirabilis (Tree tumbo).